Consider the following 459-residue polypeptide: Glycosyl hydrolase family 109 protein (459 aa).

Positions 1 to 45 (MAGDESRSNPFSRRTLLRTSAAAGAGLGVAGLSTGYGAAQPVRPA) form a signal peptide, tat-type signal. Residues 70 to 71 (NR), D92, 141 to 144 (WEWH), 161 to 162 (EC), and N190 contribute to the NAD(+) site. Substrate-binding positions include Y219, R238, 250–253 (YPTH), and Y332. Y250 provides a ligand contact to NAD(+). The interval 440–459 (DFTRGRWQTPHPGVDSPKPA) is disordered.

The protein belongs to the Gfo/Idh/MocA family. Glycosyl hydrolase 109 subfamily. It depends on NAD(+) as a cofactor. Predicted to be exported by the Tat system. The position of the signal peptide cleavage has not been experimentally proven.

Functionally, glycosidase. The protein is Glycosyl hydrolase family 109 protein of Saccharopolyspora erythraea (strain ATCC 11635 / DSM 40517 / JCM 4748 / NBRC 13426 / NCIMB 8594 / NRRL 2338).